A 132-amino-acid polypeptide reads, in one-letter code: Small ribosomal subunit protein uS8 (132 aa).

It belongs to the universal ribosomal protein uS8 family. As to quaternary structure, part of the 30S ribosomal subunit. Contacts proteins S5 and S12.

Functionally, one of the primary rRNA binding proteins, it binds directly to 16S rRNA central domain where it helps coordinate assembly of the platform of the 30S subunit. This Bacillus subtilis (strain 168) protein is Small ribosomal subunit protein uS8.